The following is a 180-amino-acid chain: Insulin-like growth factor 2 (180 aa).

The first 24 residues, 1 to 24 (MGIPVGKSMLVLLISLAFALCCIA), serve as a signal peptide directing secretion. The segment at 25 to 52 (AYRPSETLCGGELVDTLQFVCSDRGFYF) is b. 3 disulfide bridges follow: C33–C71, C45–C84, and C70–C75. Residues 53-64 (SRPSSRANRRSR) are c. Positions 65-85 (GIVEECCFRSCDLALLETYCA) are a. Positions 86-91 (TPAKSE) are d. Residues 92-180 (RDVSTSQAVL…ASSEMSSNHQ (89 aa)) constitute a propeptide, e peptide. Residues 160-180 (VLPPKDPAHGGASSEMSSNHQ) form a disordered region.

It belongs to the insulin family. As to quaternary structure, interacts with MYORG; this interaction is required for IGF2 secretion. Interacts with integrins ITGAV:ITGB3 and ITGA6:ITGB4; integrin-binding is required for IGF2 signaling. Interacts with IGFBP2. Post-translationally, proteolytically processed by PCSK4, proIGF2 is cleaved at Arg-128 and Arg-92 to generate big-IGF2 and mature IGF2.

The protein localises to the secreted. The insulin-like growth factors possess growth-promoting activity. Major fetal growth hormone in mammals. Plays a key role in regulating fetoplacental development. IGF2 is influenced by placental lactogen. Also involved in tissue differentiation. In adults, involved in glucose metabolism in adipose tissue, skeletal muscle and liver. Acts as a ligand for integrin which is required for IGF2 signaling. Positively regulates myogenic transcription factor MYOD1 function by facilitating the recruitment of transcriptional coactivators, thereby controlling muscle terminal differentiation. Inhibits myoblast differentiation and modulates metabolism via increasing the mitochondrial respiration rate. Its function is as follows. Preptin undergoes glucose-mediated co-secretion with insulin, and acts as a physiological amplifier of glucose-mediated insulin secretion. Exhibits osteogenic properties by increasing osteoblast mitogenic activity through phosphoactivation of MAPK1 and MAPK3. This is Insulin-like growth factor 2 from Rattus norvegicus (Rat).